The following is a 72-amino-acid chain: Conotoxin VnMKLT2-011 (72 aa).

An N-terminal signal peptide occupies residues 1-23 (MMKLTCVLIIAVLFLTACQLTTA). A propeptide spanning residues 24-42 (ETRDEYRAVRSSDEVRNSR) is cleaved from the precursor. 3 cysteine pairs are disulfide-bonded: Cys44–Cys57, Cys51–Cys62, and Cys56–Cys71.

The protein belongs to the conotoxin O1 superfamily. Expressed by the venom duct.

It localises to the secreted. In Conus ventricosus (Mediterranean cone), this protein is Conotoxin VnMKLT2-011.